Here is a 612-residue protein sequence, read N- to C-terminus: uncharacterized protein (612 aa).

A J domain is found at 8–75; sequence ELYLALGLPK…SKKEIYDNFG (68 aa). The chain crosses the membrane as a helical span at residues 445–465; the sequence is AVFWGLVFPITSILGVEQFFL.

This sequence belongs to the DnaJ family.

Its subcellular location is the membrane. This is an uncharacterized protein from Schizosaccharomyces pombe (strain 972 / ATCC 24843) (Fission yeast).